The following is a 393-amino-acid chain: RNA pseudouridine synthase 7 (393 aa).

The region spanning 49–118 (KTIVDLFTDE…GDITILQNEA (70 aa)) is the S4 RNA-binding domain. Aspartate 162 is a catalytic residue.

The protein belongs to the pseudouridine synthase RluA family.

The catalysed reaction is a uridine in RNA = a pseudouridine in RNA. This chain is RNA pseudouridine synthase 7, found in Oryza sativa subsp. japonica (Rice).